Here is a 299-residue protein sequence, read N- to C-terminus: tRNA dimethylallyltransferase (299 aa).

Position 13–20 (13–20 (GPTASGKT)) interacts with ATP. 15-20 (TASGKT) provides a ligand contact to substrate. The tract at residues 38–41 (DSRQ) is interaction with substrate tRNA.

The protein belongs to the IPP transferase family. Monomer. Mg(2+) is required as a cofactor.

The enzyme catalyses adenosine(37) in tRNA + dimethylallyl diphosphate = N(6)-dimethylallyladenosine(37) in tRNA + diphosphate. Its function is as follows. Catalyzes the transfer of a dimethylallyl group onto the adenine at position 37 in tRNAs that read codons beginning with uridine, leading to the formation of N6-(dimethylallyl)adenosine (i(6)A). This chain is tRNA dimethylallyltransferase, found in Prochlorococcus marinus (strain NATL2A).